Here is a 133-residue protein sequence, read N- to C-terminus: Holo-[acyl-carrier-protein] synthase (133 aa).

Mg(2+) contacts are provided by D8 and E57.

Belongs to the P-Pant transferase superfamily. AcpS family. It depends on Mg(2+) as a cofactor.

It localises to the cytoplasm. The enzyme catalyses apo-[ACP] + CoA = holo-[ACP] + adenosine 3',5'-bisphosphate + H(+). Transfers the 4'-phosphopantetheine moiety from coenzyme A to a Ser of acyl-carrier-protein. The sequence is that of Holo-[acyl-carrier-protein] synthase from Bartonella bacilliformis (strain ATCC 35685 / KC583 / Herrer 020/F12,63).